The chain runs to 323 residues: 4-hydroxythreonine-4-phosphate dehydrogenase (323 aa).

T133 is a binding site for substrate. 3 residues coordinate a divalent metal cation: H161, H206, and H261. Substrate-binding residues include K269, N278, and R287.

The protein belongs to the PdxA family. In terms of assembly, homodimer. The cofactor is Zn(2+). Mg(2+) serves as cofactor. Co(2+) is required as a cofactor.

The protein localises to the cytoplasm. It carries out the reaction 4-(phosphooxy)-L-threonine + NAD(+) = 3-amino-2-oxopropyl phosphate + CO2 + NADH. The protein operates within cofactor biosynthesis; pyridoxine 5'-phosphate biosynthesis; pyridoxine 5'-phosphate from D-erythrose 4-phosphate: step 4/5. Catalyzes the NAD(P)-dependent oxidation of 4-(phosphooxy)-L-threonine (HTP) into 2-amino-3-oxo-4-(phosphooxy)butyric acid which spontaneously decarboxylates to form 3-amino-2-oxopropyl phosphate (AHAP). This is 4-hydroxythreonine-4-phosphate dehydrogenase from Xanthomonas axonopodis pv. citri (strain 306).